Reading from the N-terminus, the 203-residue chain is Thymidylate kinase (203 aa).

Position 10 to 17 (10 to 17 (GMDGAGKS)) interacts with ATP.

Belongs to the thymidylate kinase family.

It catalyses the reaction dTMP + ATP = dTDP + ADP. Phosphorylation of dTMP to form dTDP in both de novo and salvage pathways of dTTP synthesis. The sequence is that of Thymidylate kinase from Methylobacillus flagellatus (strain ATCC 51484 / DSM 6875 / VKM B-1610 / KT).